A 251-amino-acid chain; its full sequence is uncharacterized protein (251 aa).

The first 18 residues, 1 to 18 (MRILIILSIILCSFFARA), serve as a signal peptide directing secretion.

This sequence belongs to the MlaA family.

This is an uncharacterized protein from Rickettsia typhi (strain ATCC VR-144 / Wilmington).